A 195-amino-acid polypeptide reads, in one-letter code: Imidazoleglycerol-phosphate dehydratase (195 aa).

The protein belongs to the imidazoleglycerol-phosphate dehydratase family.

Its subcellular location is the cytoplasm. The enzyme catalyses D-erythro-1-(imidazol-4-yl)glycerol 3-phosphate = 3-(imidazol-4-yl)-2-oxopropyl phosphate + H2O. The protein operates within amino-acid biosynthesis; L-histidine biosynthesis; L-histidine from 5-phospho-alpha-D-ribose 1-diphosphate: step 6/9. The polypeptide is Imidazoleglycerol-phosphate dehydratase (Dechloromonas aromatica (strain RCB)).